Consider the following 390-residue polypeptide: Zinc finger protein 121 (390 aa).

The C2H2-type 1; degenerate zinc-finger motif lies at 88–110; that stretch reads FEYSDCEEAFVDQSHLQANRITH. The C2H2-type 2; degenerate zinc-finger motif lies at 116 to 138; the sequence is YEQKQCGRAFTYSTSHAVSVKMH. C2H2-type zinc fingers lie at residues 144 to 166, 172 to 194, 200 to 222, 228 to 250, 256 to 278, 284 to 306, 312 to 334, 340 to 362, and 368 to 390; these read YECK…MRTH, YECK…VRIH, YQCK…VRIH, YECN…FKTH, FECK…FRIH, YKCK…VKIH, YECK…IRTH, YICK…VRIH, and YICN…LKTH.

This sequence belongs to the krueppel C2H2-type zinc-finger protein family.

The protein resides in the nucleus. Its function is as follows. May be involved in transcriptional regulation. The chain is Zinc finger protein 121 (ZNF121) from Homo sapiens (Human).